The following is a 596-amino-acid chain: Elongation factor 4 (596 aa).

A tr-type G domain is found at 2–184 (KHIRNFSIIA…VIVEQIPPPE (183 aa)). GTP contacts are provided by residues 14–19 (DHGKST) and 131–134 (NKID).

Belongs to the TRAFAC class translation factor GTPase superfamily. Classic translation factor GTPase family. LepA subfamily.

The protein localises to the cell inner membrane. The catalysed reaction is GTP + H2O = GDP + phosphate + H(+). Required for accurate and efficient protein synthesis under certain stress conditions. May act as a fidelity factor of the translation reaction, by catalyzing a one-codon backward translocation of tRNAs on improperly translocated ribosomes. Back-translocation proceeds from a post-translocation (POST) complex to a pre-translocation (PRE) complex, thus giving elongation factor G a second chance to translocate the tRNAs correctly. Binds to ribosomes in a GTP-dependent manner. The chain is Elongation factor 4 from Shewanella piezotolerans (strain WP3 / JCM 13877).